The sequence spans 562 residues: Arginine--tRNA ligase (562 aa).

The 'HIGH' region signature appears at 130–140 (ANPTGPLHIGH).

This sequence belongs to the class-I aminoacyl-tRNA synthetase family. As to quaternary structure, monomer.

The protein resides in the cytoplasm. It catalyses the reaction tRNA(Arg) + L-arginine + ATP = L-arginyl-tRNA(Arg) + AMP + diphosphate. This is Arginine--tRNA ligase from Geobacter metallireducens (strain ATCC 53774 / DSM 7210 / GS-15).